A 142-amino-acid chain; its full sequence is Nucleoside diphosphate kinase (142 aa).

ATP contacts are provided by Lys-9, Phe-57, Arg-85, Thr-91, Arg-102, and Asn-112. The interval 87–106 (AMGATDPAKSEKGTVRGDLG) is disordered. The active-site Pros-phosphohistidine intermediate is His-115.

Belongs to the NDK family. As to quaternary structure, homotetramer. The cofactor is Mg(2+).

It is found in the cytoplasm. It catalyses the reaction a 2'-deoxyribonucleoside 5'-diphosphate + ATP = a 2'-deoxyribonucleoside 5'-triphosphate + ADP. The enzyme catalyses a ribonucleoside 5'-diphosphate + ATP = a ribonucleoside 5'-triphosphate + ADP. In terms of biological role, major role in the synthesis of nucleoside triphosphates other than ATP. The ATP gamma phosphate is transferred to the NDP beta phosphate via a ping-pong mechanism, using a phosphorylated active-site intermediate. The sequence is that of Nucleoside diphosphate kinase from Dehalococcoides mccartyi (strain ATCC BAA-2266 / KCTC 15142 / 195) (Dehalococcoides ethenogenes (strain 195)).